A 398-amino-acid chain; its full sequence is Bombesin receptor subtype-3 (398 aa).

The Extracellular segment spans residues 1 to 40 (MAQRQPHSPNQTLISITNDTESSSVVSNDNTNKGRSGDNS). Residues N10 and N18 are each glycosylated (N-linked (GlcNAc...) asparagine). A helical transmembrane segment spans residues 41 to 62 (PGIEALCAIYITYAVIISVGIL). Residues 63-81 (GNAILIKVFFKTKSMQTVP) lie on the Cytoplasmic side of the membrane. The helical transmembrane segment at 82–102 (NIFITSLAFGDLLLLLTCVPV) threads the bilayer. The Extracellular portion of the chain corresponds to 103 to 120 (DATHYLAEGWLFGRIGCK). A disulfide bond links C119 and C202. A helical transmembrane segment spans residues 121–142 (VLSFIRLTSVGVSVFTLTILSA). Topologically, residues 143–162 (DRYKAVVKPLERQPSNAILK) are cytoplasmic. The chain crosses the membrane as a helical span at residues 163-183 (TCIKAGCVWIVSMIFALPEAI). At 184 to 219 (FSNVYSFRDPNKNVTFESCTSYPVSKKLLQEIHSLL) the chain is on the extracellular side. Residues 220-240 (CFLVFYIIPLSIISVYYSLIA) form a helical membrane-spanning segment. At 241–271 (RTLYKSTLNIPTEEQGHARKQIESRKRIART) the chain is on the cytoplasmic side. A helical membrane pass occupies residues 272–292 (VLVLVALFALCWLPNHLLYLY). Over 293–312 (HSFTSQTYVDPSAMHFIFTI) the chain is Extracellular. Residues 313-332 (FSRVLAFSNSCVNPFALYWL) traverse the membrane as a helical segment. The Cytoplasmic segment spans residues 333–398 (SKTFQKHFKA…CSVKQAEDRV (66 aa)). Residue C346 is the site of S-palmitoyl cysteine attachment.

Belongs to the G-protein coupled receptor 1 family. As to quaternary structure, interacts with C6orf89.

It localises to the cell membrane. Functionally, role in sperm cell division, maturation, or function. This receptor mediates its action by association with G proteins that activate a phosphatidylinositol-calcium second messenger system. The chain is Bombesin receptor subtype-3 (BRS3) from Macaca mulatta (Rhesus macaque).